Consider the following 362-residue polypeptide: Protein mab-21-like 3 (362 aa).

It belongs to the mab-21 family.

The protein is Protein mab-21-like 3 (MAB21L3) of Homo sapiens (Human).